The following is a 21-amino-acid chain: Peptide PGLa-BM2 (21 aa).

Alanine amide is present on Ala-21.

Expressed by the skin glands.

The protein resides in the secreted. Its function is as follows. Antimicrobial peptide. The protein is Peptide PGLa-BM2 of Xenopus boumbaensis (Mawa clawed frog).